Consider the following 365-residue polypeptide: Mitogen-activated protein kinase 13 (365 aa).

The Protein kinase domain occupies 25–308; it reads YVSPTHVGSG…AAQALTHPFF (284 aa). 31-39 is an ATP binding site; it reads VGSGAYGSV. S47 is subject to Phosphoserine. ATP is bound at residue K54. D150 (proton acceptor) is an active-site residue. T180 is subject to Phosphothreonine; by MAP2K3, MAP2K4, MAP2K6 and MAP2K7. A TXY motif is present at residues 180–182; that stretch reads TGY. Y182 is subject to Phosphotyrosine; by MAP2K3, MAP2K4, MAP2K6 and MAP2K7. Residue S350 is modified to Phosphoserine.

This sequence belongs to the protein kinase superfamily. CMGC Ser/Thr protein kinase family. MAP kinase subfamily. In terms of assembly, interacts with MAPK8IP2. The cofactor is Mg(2+). Post-translationally, dually phosphorylated on Thr-180 and Tyr-182 by MAP2K3/MKK3, MAP2K4/MKK4, MAP2K6/MKK6 and MAP2K7/MKK7, which activates the enzyme. Dephosphorylated by dual specificity phosphatase DUSP1. In terms of tissue distribution, expressed in testes, pancreas, small intestine, lung and kidney. Abundant in macrophages, also present in neutrophils, CD4+ T-cells, and endothelial cells.

It carries out the reaction L-seryl-[protein] + ATP = O-phospho-L-seryl-[protein] + ADP + H(+). It catalyses the reaction L-threonyl-[protein] + ATP = O-phospho-L-threonyl-[protein] + ADP + H(+). With respect to regulation, activated by phosphorylation on threonine and tyrosine by dual specificity kinases, MAP2K3/MKK3, MAP2K6/MKK6, MAP2K4/MKK4 and MAP2K7/MKK7. Activation by ultraviolet radiation, hyperosmotic shock, anisomycin or by TNF-alpha is mediated by MAP2K3/MKK3. Inhibited by dual specificity phosphatase DUSP1. Functionally, serine/threonine kinase which acts as an essential component of the MAP kinase signal transduction pathway. MAPK13 is one of the four p38 MAPKs which play an important role in the cascades of cellular responses evoked by extracellular stimuli such as pro-inflammatory cytokines or physical stress leading to direct activation of transcription factors such as ELK1 and ATF2. Accordingly, p38 MAPKs phosphorylate a broad range of proteins and it has been estimated that they may have approximately 200 to 300 substrates each. MAPK13 is one of the less studied p38 MAPK isoforms. Some of the targets are downstream kinases such as MAPKAPK2, which are activated through phosphorylation and further phosphorylate additional targets. Plays a role in the regulation of protein translation by phosphorylating and inactivating EEF2K. Involved in cytoskeletal remodeling through phosphorylation of MAPT and STMN1. Mediates UV irradiation induced up-regulation of the gene expression of CXCL14. Plays an important role in the regulation of epidermal keratinocyte differentiation, apoptosis and skin tumor development. Phosphorylates the transcriptional activator MYB in response to stress which leads to rapid MYB degradation via a proteasome-dependent pathway. MAPK13 also phosphorylates and down-regulates PRKD1 during regulation of insulin secretion in pancreatic beta cells. The protein is Mitogen-activated protein kinase 13 (MAPK13) of Homo sapiens (Human).